Consider the following 201-residue polypeptide: uncharacterized protein (201 aa).

A signal peptide spans 1 to 28; sequence MMTFKNLRYGLSSSVVLAASLFSVLSYA.

This sequence belongs to the fimbrial protein family.

The protein resides in the fimbrium. In terms of biological role, part of the yadCKLM-htrE-yadVN fimbrial operon. Could contribute to adhesion to various surfaces in specific environmental niches. This is an uncharacterized protein from Escherichia coli (strain K12).